The chain runs to 187 residues: Ribosome-recycling factor (187 aa).

The protein belongs to the RRF family.

It localises to the cytoplasm. Its function is as follows. Responsible for the release of ribosomes from messenger RNA at the termination of protein biosynthesis. May increase the efficiency of translation by recycling ribosomes from one round of translation to another. This Paracoccus zeaxanthinifaciens protein is Ribosome-recycling factor.